A 127-amino-acid polypeptide reads, in one-letter code: uncharacterized protein (127 aa).

3 helical membrane passes run 20–42, 54–76, and 91–110; these read NMIWLYEVYMLYKTYTSYFFMSS, IYFCYCANFIALFRVIFGTIFVY, and WILIYLKGSINSLLYMASFT.

The protein resides in the membrane. The protein localises to the cytoplasm. This is an uncharacterized protein from Schizosaccharomyces pombe (strain 972 / ATCC 24843) (Fission yeast).